Reading from the N-terminus, the 566-residue chain is Myo-inositol transporter 1A (566 aa).

At 1 to 64 the chain is on the cytoplasmic side; the sequence is MSDEKNYGIS…ERTEKLTKFV (64 aa). The helical transmembrane segment at 65 to 85 threads the bilayer; that stretch reads VGLALFASVSGFCFGFDTGVI. Topologically, residues 86–106 are extracellular; it reads SAALVSIKDDFGHILDDTEKE. A helical membrane pass occupies residues 107–127; sequence WISAATSCGALVGALSSGALA. The Cytoplasmic portion of the chain corresponds to 128–140; that stretch reads DRVGRKWTLAVGD. Residues 141 to 161 traverse the membrane as a helical segment; it reads VWFTLGAIIICSSFSVVQMIV. Residues 162-163 lie on the Extracellular side of the membrane; it reads GR. Residues 164–184 traverse the membrane as a helical segment; the sequence is AVLGLGVGTAAAIAPLYIAEV. Topologically, residues 185-192 are cytoplasmic; the sequence is APTRFRGA. A helical membrane pass occupies residues 193–213; that stretch reads LVTVQSIAITGGQFFSYCIGI. Residues 214-222 are Extracellular-facing; it reads PLTGHNGWR. The chain crosses the membrane as a helical span at residues 223–243; it reads IQFAIGIVPAVVQAAVVHFLP. Over 244-313 the chain is Cytoplasmic; the sequence is ESPRYDLLRG…VLTEGKYRKP (70 aa). A helical membrane pass occupies residues 314–334; it reads AITALGIGIFQQLCGFNSLMY. The Extracellular portion of the chain corresponds to 335-349; the sequence is YAATIFSYAGFDNPT. Residues 350–370 traverse the membrane as a helical segment; it reads SVGLIVSGTNWFFTFVAMMIL. Over 371-377 the chain is Cytoplasmic; that stretch reads DRVGKRR. A helical membrane pass occupies residues 378–398; the sequence is ILLSTYPGMIAGLALASVAFW. Topologically, residues 399–421 are extracellular; the sequence is KMTGSTGHRLVEGTEYPQQWSNM. The chain crosses the membrane as a helical span at residues 422-442; sequence MLGMMVVFIAFYATGSGNITW. Topologically, residues 443–458 are cytoplasmic; it reads TVGEMFPLEMRGIGAS. Residues 459-479 traverse the membrane as a helical segment; it reads ILAGGVWAANIVISATFLTLM. Topologically, residues 480-485 are extracellular; sequence NAIGPT. Residues 486 to 506 form a helical membrane-spanning segment; that stretch reads PTFALYAGICLAGLIFIYFCY. The Cytoplasmic portion of the chain corresponds to 507–566; it reads PEPSGLSLEEIQIIYNYGFGVQKSREIRAEHKLKAQEMRDRANSHIGGSATASDDQLNKV. Residues 546-566 are disordered; that stretch reads DRANSHIGGSATASDDQLNKV. Residues 556 to 566 show a composition bias toward polar residues; it reads ATASDDQLNKV.

This sequence belongs to the major facilitator superfamily. Sugar transporter (TC 2.A.1.1) family.

The protein resides in the cell membrane. It carries out the reaction myo-inositol(out) + H(+)(out) = myo-inositol(in) + H(+)(in). Functionally, major transporter for myo-inositol. Plays a role in the traversal of the host blood-brain barrier. The polypeptide is Myo-inositol transporter 1A (Cryptococcus neoformans var. grubii serotype A (strain H99 / ATCC 208821 / CBS 10515 / FGSC 9487) (Filobasidiella neoformans var. grubii)).